A 636-amino-acid chain; its full sequence is Rik1-associated factor 2 (636 aa).

Component of the Clr4 methyltransferase complex (ClrC) composed of at least clr4, rik1, pcu4, rbx1, raf1 and raf2. The cullin pcu4, rik1, raf1, raf2 and the ring-box protein rbx1 are components of an E3 ubiquitin ligase, whose activity is essential for heterochromatin assembly. Interacts with pcu4.

The protein localises to the cytoplasm. Its subcellular location is the mitochondrion. The protein resides in the nucleus. It localises to the chromosome. Functionally, component of the Clr4 methyltransferase complex (ClrC) which contributes to the establishment of heterochromatin by specifically methylating histone H3 to form H3K9me. ClrC preferentially ubiquitylates H3K14 and ClrC-mediated H3 ubiquitination promotes clr4 methyltransferase activity for the methylation of H3K9. H3K9me represents a specific tag for epigenetic transcriptional repression by recruiting swi6/HP1 to methylated histones which leads to transcriptional silencing within centromeric heterochromatin, telomeric regions and at the silent mating-type loci. Has a role in both mitotic and meiotic chromosome segregation. The sequence is that of Rik1-associated factor 2 (raf2) from Schizosaccharomyces pombe (strain 972 / ATCC 24843) (Fission yeast).